A 130-amino-acid polypeptide reads, in one-letter code: uncharacterized protein (130 aa).

Positions 48–130 are disordered; that stretch reads RGYWPQGPPP…LIAAMEEDER (83 aa). Over residues 80–107 the composition is skewed to gly residues; the sequence is GGDGGGDAGAGPSGVAGTAAGGAGGDGA.

This is an uncharacterized protein from Aotus trivirgatus (Three-striped night monkey).